The chain runs to 216 residues: Vesicle-associated membrane protein 7A (216 aa).

The Cytoplasmic segment spans residues 1 to 189 (MSQTDILYAC…KRKLWWQNKK (189 aa)). Residues 6–112 (ILYACVSYKG…ATYDPFIRVL (107 aa)) enclose the Longin domain. In terms of domain architecture, v-SNARE coiled-coil homology spans 126–186 (KMNLVMDQVS…VALKRKLWWQ (61 aa)). The chain crosses the membrane as a helical; Anchor for type IV membrane protein span at residues 190 to 210 (LAIAIGLVVCILIAVITLALL). At 211-216 (KYFKVI) the chain is on the vesicular side.

Belongs to the synaptobrevin family. Component of the SNARE complex composed of syn7A, syn8A, vamp7A and vti1A.

The protein localises to the cytoplasmic vesicle. It localises to the secretory vesicle membrane. Its subcellular location is the golgi apparatus. It is found in the trans-Golgi network membrane. The protein resides in the late endosome membrane. The protein localises to the lysosome membrane. It localises to the endoplasmic reticulum membrane. Its subcellular location is the phagosome membrane. Functionally, involved in the targeting and/or fusion of transport vesicles to their target membrane during transport of proteins from the early endosome to the lysosome. Required for heterotypic fusion of late endosomes with lysosomes and homotypic lysosomal fusion. Required for calcium regulated lysosomal exocytosis. The chain is Vesicle-associated membrane protein 7A from Dictyostelium discoideum (Social amoeba).